The following is a 396-amino-acid chain: NADH-quinone oxidoreductase subunit D (396 aa).

Belongs to the complex I 49 kDa subunit family. In terms of assembly, NDH-1 is composed of 14 different subunits. Subunits NuoB, C, D, E, F, and G constitute the peripheral sector of the complex.

Its subcellular location is the cell inner membrane. It carries out the reaction a quinone + NADH + 5 H(+)(in) = a quinol + NAD(+) + 4 H(+)(out). Functionally, NDH-1 shuttles electrons from NADH, via FMN and iron-sulfur (Fe-S) centers, to quinones in the respiratory chain. The immediate electron acceptor for the enzyme in this species is believed to be ubiquinone. Couples the redox reaction to proton translocation (for every two electrons transferred, four hydrogen ions are translocated across the cytoplasmic membrane), and thus conserves the redox energy in a proton gradient. The chain is NADH-quinone oxidoreductase subunit D from Rhodopseudomonas palustris (strain BisB18).